Reading from the N-terminus, the 636-residue chain is MGRLLDTIDSPTDLKKVPVEQLPALCQEIREQIIQTCARNGGHLGSSLGAVEINVALHHVFSSPQDKLVWDVGHQAYAHKLLTGRREAFRTIRTEGGLAGFPERHESAHDAFGVGHASTAISAALGMIEAKRVTGEPGKVVAVVGDGAMTGGVAFEGLNQAGYLGRNLLVVLNDNEMSISPNVGALSEWFSKKFASRTYNRWRRQVKEFLESVPKGPEAIEIIRHGINATKALVTPGILFEGLGFHYVGPVDGHDVKGLVETFQKLAIFDGPVLLHAITTKGKGYHPAESDKATRGHGLSFFDVATGKPVKKSPGAKAYTDLFAEALCEEMEHDPRVVAITAAMLEGTGLIKAKQRFPDRTYDVGIAEQHAVTFAAGLACEGIRPVVAIYSTFLQRAYDQIIHDVALQKLPVTFALDRGGLVGADGKTHQGAFDLAYLRCVPGLVVMAPSDENELRHMLHTSLQHEGPAALRYPRGAGEGVALEPARVLEIGKGRLVRNVPGKPDVCVVAAGTTLKAALAAAEALAAEGVAATVVDPRFVKPLDEELICAEAARAKRVVTVEEGCLAGGFGTACLEAFERRGLLEAGLGVRRLGIPDEFITHAEQAKQRAWVGIDADAIAAACRALVGDRKARGVA.

Thiamine diphosphate contacts are provided by residues His74 and 115-117 (GHA). Asp146 contacts Mg(2+). Residues 147–148 (GA), Asn175, Tyr285, and Glu368 contribute to the thiamine diphosphate site. A Mg(2+)-binding site is contributed by Asn175.

Belongs to the transketolase family. DXPS subfamily. As to quaternary structure, homodimer. Mg(2+) serves as cofactor. The cofactor is thiamine diphosphate.

It catalyses the reaction D-glyceraldehyde 3-phosphate + pyruvate + H(+) = 1-deoxy-D-xylulose 5-phosphate + CO2. It functions in the pathway metabolic intermediate biosynthesis; 1-deoxy-D-xylulose 5-phosphate biosynthesis; 1-deoxy-D-xylulose 5-phosphate from D-glyceraldehyde 3-phosphate and pyruvate: step 1/1. Functionally, catalyzes the acyloin condensation reaction between C atoms 2 and 3 of pyruvate and glyceraldehyde 3-phosphate to yield 1-deoxy-D-xylulose-5-phosphate (DXP). This chain is 1-deoxy-D-xylulose-5-phosphate synthase, found in Anaeromyxobacter sp. (strain K).